The following is a 259-amino-acid chain: Glucosamine-6-phosphate deaminase (259 aa).

Residue Asp-66 is the Proton acceptor; for enolization step of the active site. Asp-135 (for ring-opening step) is an active-site residue. His-137 functions as the Proton acceptor; for ring-opening step in the catalytic mechanism. Glu-142 acts as the For ring-opening step in catalysis.

This sequence belongs to the glucosamine/galactosamine-6-phosphate isomerase family. NagB subfamily.

The enzyme catalyses alpha-D-glucosamine 6-phosphate + H2O = beta-D-fructose 6-phosphate + NH4(+). The protein operates within amino-sugar metabolism; N-acetylneuraminate degradation; D-fructose 6-phosphate from N-acetylneuraminate: step 5/5. Catalyzes the reversible isomerization-deamination of glucosamine 6-phosphate (GlcN6P) to form fructose 6-phosphate (Fru6P) and ammonium ion. This chain is Glucosamine-6-phosphate deaminase, found in Pseudarthrobacter chlorophenolicus (strain ATCC 700700 / DSM 12829 / CIP 107037 / JCM 12360 / KCTC 9906 / NCIMB 13794 / A6) (Arthrobacter chlorophenolicus).